The chain runs to 1406 residues: Enhancer of mRNA-decapping protein 4 (1406 aa).

Alanine 2 carries the N-acetylalanine modification. A phosphoserine mark is found at serine 3 and serine 6. At lysine 125 the chain carries N6-acetyllysine. 4 WD repeats span residues 174-214 (GFTG…GKIQ), 230-277 (NHFR…SSHN), 295-334 (GHST…QDEP), and 342-393 (PHDG…CLQT). A phosphoserine mark is found at serine 560, serine 565, serine 583, and serine 585. 2 disordered regions span residues 604-631 (SLQQ…SSSS) and 667-686 (SLTL…SLLP). The segment covering 609 to 631 (SASPSSSSSSSSSSSSSSSSSSS) has biased composition (low complexity). 4 positions are modified to phosphoserine: serine 680, serine 712, serine 727, and serine 729. Residues 719–744 (EPLGLPQASPSRTRSPDVISSASTAL) form a disordered region. Positions 726-744 (ASPSRTRSPDVISSASTAL) are enriched in polar residues. Phosphothreonine is present on threonine 731. Serine 733 and serine 745 each carry phosphoserine. Disordered regions lie at residues 782 to 855 (HLLS…NGLQ) and 873 to 951 (QRDS…VAEP). Composition is skewed to polar residues over residues 823–832 (EVATPDSQVW) and 841–852 (ETCSTLTESPRN). The residue at position 826 (threonine 826) is a Phosphothreonine. Serine 849 and serine 876 each carry phosphoserine. Threonine 879 is subject to Phosphothreonine. A phosphoserine mark is found at serine 880, serine 884, serine 892, serine 895, and serine 897. Threonine 906 is subject to Phosphothreonine. Residues 971–1030 (HNQEELLQRLCAQLEGLQSTVTDHVERALETRHEQEQRRLERALAEGQQRGGQLQEQLTQ) are a coiled coil. Serine 1385 carries the phosphoserine modification.

Belongs to the WD repeat EDC4 family. In terms of assembly, part of a decapping complex consisting of DCP1A, DCP2, EDC3, EDC4 and probably DDX6. Part of a complex consisting of DCP1A, EDC3, EDC4 and DDX6. Part of a complex consisting of DCP1B, EDC3, EDC4 and DDX6. Interacts with DCP2. Interacts with RC3H1. Interacts with NBDY. Interacts with Tex19.1 and, probably, Tex19.2. Interacts with LSM14A. Interacts with DDX6.

The protein localises to the cytoplasm. It localises to the P-body. The protein resides in the nucleus. Its function is as follows. In the process of mRNA degradation, seems to play a role in mRNA decapping. Component of a complex containing DCP2 and DCP1A which functions in decapping of ARE-containing mRNAs. Promotes complex formation between DCP1A and DCP2. Enhances the catalytic activity of DCP2 (in vitro). In Mus musculus (Mouse), this protein is Enhancer of mRNA-decapping protein 4.